The primary structure comprises 311 residues: Protoheme IX farnesyltransferase (311 aa).

8 helical membrane-spanning segments follow: residues 39-59 (LLAM…PIGE), 61-81 (LPEI…AGAF), 111-131 (ALVL…VASP), 133-153 (AALF…MWSK), 162-182 (IGSV…SGDL), 187-207 (IIGL…AIAI), 246-266 (FFFV…SLIW), and 287-307 (FVFS…FSLL).

Belongs to the UbiA prenyltransferase family. Protoheme IX farnesyltransferase subfamily. In terms of assembly, interacts with CtaA.

The protein resides in the cell membrane. It catalyses the reaction heme b + (2E,6E)-farnesyl diphosphate + H2O = Fe(II)-heme o + diphosphate. The protein operates within porphyrin-containing compound metabolism; heme O biosynthesis; heme O from protoheme: step 1/1. Converts heme B (protoheme IX) to heme O by substitution of the vinyl group on carbon 2 of heme B porphyrin ring with a hydroxyethyl farnesyl side group. This chain is Protoheme IX farnesyltransferase, found in Shouchella clausii (strain KSM-K16) (Alkalihalobacillus clausii).